Here is a 314-residue protein sequence, read N- to C-terminus: Ribosome maturation factor RimP (314 aa).

Disordered stretches follow at residues 1 to 20 (MDLDGKVQPPSAQVGQQPLS), 152 to 176 (PIEASSPIGGSKGALRLTRTDAKPE), and 206 to 314 (AAKA…PAPK). A compositionally biased stretch (polar residues) spans 10–19 (PSAQVGQQPL). Over residues 215–227 (DGNNEEQDEEQEE) the composition is skewed to acidic residues. The span at 247-256 (PEHNPAQNPI) shows a compositional bias: polar residues. Basic and acidic residues-rich tracts occupy residues 270 to 279 (TEFKKSKTGE) and 303 to 314 (SGHDMPRKPAPK).

The protein belongs to the RimP family.

The protein localises to the cytoplasm. In terms of biological role, required for maturation of 30S ribosomal subunits. This chain is Ribosome maturation factor RimP, found in Beijerinckia indica subsp. indica (strain ATCC 9039 / DSM 1715 / NCIMB 8712).